A 471-amino-acid polypeptide reads, in one-letter code: Proton-coupled amino acid transporter-like protein pathetic (471 aa).

Asn61 is a glycosylation site (N-linked (GlcNAc...) asparagine). The next 10 membrane-spanning stretches (helical) occupy residues 81–101 (FAFMCSGLIMGIFSTIFTAFI), 153–173 (ILFGLFLTYFGTCSVYTVIVA), 187–207 (AVSLRMLICIMLVPLILIAWV), 216–236 (VSMVANVFMGLGLGITFYYLV), 253–273 (LPQFFSITIFAMEAIGVVMPL), 283–303 (FLGICGVLSQGMSGVTLIYML), 337–357 (LISLAVYCTFGLQFFVCLEII), 375–395 (VLRTVLVTAAVVLAVAVPTIG), 397–417 (FMGLIGAFCFSILGLIFPVVI), and 432–452 (WILWKNAIITLCGIGALVFGT).

The protein belongs to the amino acid/polyamine transporter 2 family. As to expression, in third instar larvae, expressed at highest levels in the brain and digestive system with particularly high levels in surface glia of the brain (at protein level). In third instar larvae, expressed in all cells of the body wall (at protein level). Within the body wall of third instar larvae, most highly expressed in epithelial cells and sensory neurons. Expressed at a similar level in all da neurons (at protein level). Widely expressed during embryonic and late larval stages. Levels are highly dynamic in embryogenesis with surges of expression in many structures, including muscle primordia, salivary glands, proventriculus, trachea and gonads. Expressed in all or most cells of larval imaginal disks. Expression is also particularly strong in the pouch and hinge regions of the wing disk and in the morphogenetic furrow of the eye disk.

It is found in the cell membrane. Its subcellular location is the lysosome membrane. The protein resides in the late endosome membrane. The protein localises to the cell projection. It localises to the axon. It is found in the dendrite. Its subcellular location is the perikaryon. The protein resides in the cytoplasm. Functionally, amino acid transporter which has pH-dependent electrogenic transport activity for alanine and glycine but not for proline. Plays a role in positive regulation of growth by directly or indirectly modulating the effects of the TOR signaling pathway. Required in a cell-autonomous manner for dendrite growth in neurons with large dendrite arbors. This Drosophila melanogaster (Fruit fly) protein is Proton-coupled amino acid transporter-like protein pathetic.